The chain runs to 308 residues: Glycosyltransferase 6 domain-containing protein 1 (308 aa).

The Cytoplasmic segment spans residues 1–6 (MNSKRM). A helical; Signal-anchor for type II membrane protein transmembrane segment spans residues 7–23 (LLLVLFAFSLMLVERYF). Over 24-308 (RNHQVEELRL…KVAHDSHRKL (285 aa)) the chain is Lumenal. N74 is a glycosylation site (N-linked (GlcNAc...) asparagine). Substrate contacts are provided by residues 82–87 (FATGRF), 173–175 (AVN), and 195–198 (HAWW). E263 functions as the Nucleophile in the catalytic mechanism.

The protein belongs to the glycosyltransferase 6 family. It depends on Mn(2+) as a cofactor.

The protein resides in the membrane. This chain is Glycosyltransferase 6 domain-containing protein 1 (GLT6D1), found in Macaca fascicularis (Crab-eating macaque).